We begin with the raw amino-acid sequence, 428 residues long: C4-dicarboxylate transport protein (428 aa).

A run of 9 helical transmembrane segments spans residues 8–28 (SLYF…HFYP), 44–64 (LIKM…IAGM), 76–96 (VALL…LVIV), 142–162 (IGAF…LFGF), 184–204 (VIFG…FGAM), 222–242 (LIVC…GSIA), 289–309 (VVGL…SIYL), 326–346 (IFHQ…AAGV), and 352–372 (IVLA…LALI).

Belongs to the dicarboxylate/amino acid:cation symporter (DAACS) (TC 2.A.23) family.

It is found in the cell inner membrane. Responsible for the transport of dicarboxylates such as succinate, fumarate, and malate from the periplasm across the membrane. The sequence is that of C4-dicarboxylate transport protein from Cronobacter sakazakii (strain ATCC BAA-894) (Enterobacter sakazakii).